We begin with the raw amino-acid sequence, 284 residues long: Diaminopimelate epimerase (284 aa).

Asn20, Gln53, and Asn73 together coordinate substrate. The active-site Proton donor is Cys82. Residues 83–84 (GN), Asn167, Asn200, and 218–219 (ER) contribute to the substrate site. Residue Cys227 is the Proton acceptor of the active site. Residue 228-229 (GS) coordinates substrate.

It belongs to the diaminopimelate epimerase family. As to quaternary structure, homodimer.

Its subcellular location is the cytoplasm. It catalyses the reaction (2S,6S)-2,6-diaminopimelate = meso-2,6-diaminopimelate. The protein operates within amino-acid biosynthesis; L-lysine biosynthesis via DAP pathway; DL-2,6-diaminopimelate from LL-2,6-diaminopimelate: step 1/1. Catalyzes the stereoinversion of LL-2,6-diaminopimelate (L,L-DAP) to meso-diaminopimelate (meso-DAP), a precursor of L-lysine and an essential component of the bacterial peptidoglycan. The sequence is that of Diaminopimelate epimerase from Xylella fastidiosa (strain 9a5c).